We begin with the raw amino-acid sequence, 311 residues long: Methionyl-tRNA formyltransferase (311 aa).

Residue 112–115 (SLLP) participates in (6S)-5,6,7,8-tetrahydrofolate binding.

Belongs to the Fmt family.

It catalyses the reaction L-methionyl-tRNA(fMet) + (6R)-10-formyltetrahydrofolate = N-formyl-L-methionyl-tRNA(fMet) + (6S)-5,6,7,8-tetrahydrofolate + H(+). Attaches a formyl group to the free amino group of methionyl-tRNA(fMet). The formyl group appears to play a dual role in the initiator identity of N-formylmethionyl-tRNA by promoting its recognition by IF2 and preventing the misappropriation of this tRNA by the elongation apparatus. This chain is Methionyl-tRNA formyltransferase, found in Bradyrhizobium sp. (strain ORS 278).